The sequence spans 549 residues: Cation/acetate symporter ActP (549 aa).

Transmembrane regions (helical) follow at residues 33 to 53, 77 to 97, 103 to 123, 148 to 168, 183 to 203, 206 to 226, 262 to 282, 303 to 323, 355 to 375, 404 to 424, 428 to 448, 464 to 484, and 493 to 513; these read WQAIIMFLIFVVFTLGITYWA, LAIAGDYMSAASFLGISALVF, GLIYSLGFLVGWPIILFLIAE, ILSACGSLVVVALYLIAQMVG, IAVVLVGVLMMMYVLFGGMLA, WVQIIKAVLLLFGASFMAFMV, ISALSLGLGLMFGTAGLPHIL, GFMGYFYILTFIIGFGAIMLV, LFLGFISAVAFATILAVVAGL, VSKITVLVLGVIAIILGVLFE, IAFMVGLAFAIAASCNFPIIL, GGWLGLLTAVVLMILGPTIWV, and IFPYEYPALFSISVAFLGIWF.

This sequence belongs to the sodium:solute symporter (SSF) (TC 2.A.21) family.

The protein resides in the cell inner membrane. Transports acetate. This Salmonella gallinarum (strain 287/91 / NCTC 13346) protein is Cation/acetate symporter ActP.